Consider the following 83-residue polypeptide: Toxin BmKBT (83 aa).

The first 19 residues, M1–T19, serve as a signal peptide directing secretion. One can recognise an LCN-type CS-alpha/beta domain in the interval K21 to R81. 4 cysteine pairs are disulfide-bonded: C31/C80, C35/C54, C41/C61, and C45/C63. Residue K83 is a propeptide, removed by a carboxypeptidase.

The protein belongs to the long (4 C-C) scorpion toxin superfamily. Sodium channel inhibitor family. Beta subfamily. In terms of tissue distribution, expressed by the venom gland.

Its subcellular location is the secreted. In terms of biological role, this toxin increases the peak sodium current, slows down the inactivation of sodium channels (Nav), and prolongs the action potential of dorsal root ganglion neurons, which indicates that it behaves as a classical alpha-toxin. It binds to mammal brain and insect sodium channels, but with a different manner. This peptide may bind to a distinct receptor site on mammal brain sodium channels, which is unconnected with that for BmKAS (a beta-toxin), BmKIT2 (a beta-toxin) or BmK I (an alpha toxin). In contrast, the receptor site for BmKabT on insect sodium channels might be closely related to that for the beta-insect depressant toxin BmKIT2. Possesses potent toxicity in mice but induces only paralysis in cotton bollworm. The sequence is that of Toxin BmKBT from Olivierus martensii (Manchurian scorpion).